Reading from the N-terminus, the 496-residue chain is Probable E3 ubiquitin-protein ligase XBOS32 (496 aa).

5 ANK repeats span residues 50–79, 83–112, 117–147, 180–209, and 223–252; these read GRNS…EINL, RGQT…NVHR, NGGS…SMPN, GGLT…SVIE, and AGST…SLSA. The segment at 321-368 adopts an RING-type zinc-finger fold; that stretch reads CAVCLEGSCSVAAEGCKHEFCTRCALYLCSTSYTSVSPAGAIPCPLCR.

The enzyme catalyses S-ubiquitinyl-[E2 ubiquitin-conjugating enzyme]-L-cysteine + [acceptor protein]-L-lysine = [E2 ubiquitin-conjugating enzyme]-L-cysteine + N(6)-ubiquitinyl-[acceptor protein]-L-lysine.. It participates in protein modification; protein ubiquitination. This Oryza sativa subsp. japonica (Rice) protein is Probable E3 ubiquitin-protein ligase XBOS32 (XBOS32).